An 89-amino-acid polypeptide reads, in one-letter code: Large ribosomal subunit protein bL27 (89 aa).

The interval 1–26 is disordered; it reads MAHKKAGGSSKNGRDSNAQRRGVKRF.

This sequence belongs to the bacterial ribosomal protein bL27 family.

This Maridesulfovibrio salexigens (strain ATCC 14822 / DSM 2638 / NCIMB 8403 / VKM B-1763) (Desulfovibrio salexigens) protein is Large ribosomal subunit protein bL27.